A 194-amino-acid chain; its full sequence is Ras-like protein RAS1 (194 aa).

16 to 23 (GAGGVGKS) contacts GTP. The Effector region signature appears at 38 to 46 (YDPTIEDSY). GTP contacts are provided by residues 63–67 (DTAGQ) and 122–125 (NKVD). Cysteine methyl ester is present on cysteine 191. Cysteine 191 carries S-geranylgeranyl cysteine lipidation. Positions 192 to 194 (TLL) are cleaved as a propeptide — removed in mature form.

The protein belongs to the small GTPase superfamily. Ras family.

It localises to the cell membrane. It carries out the reaction GTP + H2O = GDP + phosphate + H(+). With respect to regulation, alternates between an inactive form bound to GDP and an active form bound to GTP. Activated by a guanine nucleotide-exchange factor (GEF) and inactivated by a GTPase-activating protein (GAP). In terms of biological role, ras proteins bind GDP/GTP and possess intrinsic GTPase activity. The chain is Ras-like protein RAS1 (RAS1) from Hydra vulgaris (Hydra).